The following is a 412-amino-acid chain: MEVDHADRDGARRRCREYLLALEEERRKIQVFQRELPLCFDLVTQTIEGMRSQMDAAGSEETVSDQGPPPVLEEFIPLKPSLSLSSSEEESTHADAAKSGKKEEAETSERHSSPPPPPPEAKKVTPDWLQSVQLWSQEEPQQPSSPSPTPTKDLPCKPVALNARKAGGAFQPFEKEKRAELPASSTTAAASSTVVGDSGDKPTDDDTEKHMETDKDNDKDAKDKDKEGQSQPHRKPRRCWAPELHRRFLQALQQLGGSHVATPKQIRELMKVDGLTNDEVKSHLQKYRLHTRRPSSTGQSSAAAGVPAPPAPQFVVVGSIWVPPPEYAAAAAAQQHVQLAAAGNNASGSANPVYAPVAMLPAGLQPHSHRKQHQQQQQGQRHSGSEGRRSGDAGDGSSSSPAVSSSSQTTSA.

Disordered regions lie at residues 54-241, 286-310, and 358-412; these read MDAA…RCWA, KYRL…PAPP, and AMLP…TTSA. The segment covering 90-112 has biased composition (basic and acidic residues); sequence ESTHADAAKSGKKEEAETSERHS. A compositionally biased stretch (low complexity) spans 183–193; sequence ASSTTAAASST. A compositionally biased stretch (basic and acidic residues) spans 198-228; it reads SGDKPTDDDTEKHMETDKDNDKDAKDKDKEG. In terms of domain architecture, HTH myb-type spans 232-292; it reads PHRKPRRCWA…HLQKYRLHTR (61 aa). Positions 263-288 form a DNA-binding region, H-T-H motif; it reads PKQIRELMKVDGLTNDEVKSHLQKYR. A compositionally biased stretch (basic and acidic residues) spans 383–392; sequence SGSEGRRSGD. Low complexity predominate over residues 395–412; that stretch reads DGSSSSPAVSSSSQTTSA.

Its subcellular location is the nucleus. In terms of biological role, transcriptional repressor that may play a role in response to nitrogen. May be involved in a time-dependent signaling for transcriptional regulation of nitrate-responsive genes. Binds specifically to the DNA sequence motif 5'-GAATC-3' or 5'-GAATATTC-3'. Represses the activity of its own promoter trough binding to these motifs. This Oryza sativa subsp. japonica (Rice) protein is Transcription factor NIGT1.